The following is a 63-amino-acid chain: uncharacterized protein (63 aa).

The N-terminal stretch at 1-15 is a signal peptide; the sequence is MRNPVVWGMIYFAVG. Cys-16 carries N-palmitoyl cysteine lipidation. Cys-16 carries S-diacylglycerol cysteine lipidation. Residues 34 to 56 traverse the membrane as a helical segment; sequence SILLMVFAAYNISISFKMFAFSF.

It is found in the cell membrane. This is an uncharacterized protein from Bacillus subtilis (strain 168).